The primary structure comprises 939 residues: Nonsense-mediated mRNA decay factor SMG8 (939 aa).

2 disordered regions span residues 561–600 and 617–645; these read KICT…QLSP and LNES…ADTE. A compositionally biased stretch (acidic residues) spans 567–587; sequence GEDENEDGETEEADEDTEEKE. Low complexity predominate over residues 617–629; the sequence is LNESQESSEQLSG.

It belongs to the SMG8 family.

Its function is as follows. Involved in nonsense-mediated decay (NMD) of mRNAs containing premature stop codons. Probable component of kinase complex containing nonC and recruited to stalled ribosomes. In Drosophila ananassae (Fruit fly), this protein is Nonsense-mediated mRNA decay factor SMG8.